The chain runs to 660 residues: Neurexin-2-beta (660 aa).

The span at 1 to 10 (MPPGGSGQGG) shows a compositional bias: gly residues. The tract at residues 1–27 (MPPGGSGQGGCPRRPPALAGPLPPPPP) is disordered. The first 46 residues, 1 to 46 (MPPGGSGQGGCPRRPPALAGPLPPPPPPPPLPLLLGLLLLLGAAEG), serve as a signal peptide directing secretion. Residues 47–584 (ARVSSSLSTT…EVIRESSSTT (538 aa)) lie on the Extracellular side of the membrane. Residues 87–295 (TTYIFGKGGA…HLRLVGEGPS (209 aa)) enclose the Laminin G-like domain. The Ca(2+) site is built by Asp-139 and Val-156. Asn-186 is a glycosylation site (N-linked (GlcNAc...) asparagine). Ca(2+) contacts are provided by Ile-238 and Asn-240. The O-linked (Xyl...) (heparan sulfate) serine glycan is linked to Ser-350. Disordered stretches follow at residues 408–458 (ATQD…LPPT) and 537–571 (EPRR…RGPP). Residue Asn-561 is glycosylated (N-linked (GlcNAc...) asparagine). Residues 585-605 (GMVVGIVAAAALCILILLYAM) form a helical membrane-spanning segment. The Cytoplasmic portion of the chain corresponds to 606–660 (YKYRNRDEGSYQVDQSRNYISNSAQSNGAVVKEKAPAAPKTPSKAKKNKDKEYYV). The segment at 627 to 660 (NSAQSNGAVVKEKAPAAPKTPSKAKKNKDKEYYV) is disordered.

It belongs to the neurexin family. In terms of assembly, interacts (via cytoplasmic C-terminal region) with CASK. Specific isoforms bind alpha-dystroglycan and neuroligins NLGN1, NLGN2 and NLGN3. Interacts with CBLN1, CBLN2 and, less avidly, with CBLN4. Interacts with CLSTN3. O-glycosylated; contains heparan sulfate. Heparan sulfate attachment is required for synapse development by mediating interactions with neuroligins.

The protein resides in the presynaptic cell membrane. Functionally, neuronal cell surface protein that may be involved in cell recognition and cell adhesion. This is Neurexin-2-beta from Mus musculus (Mouse).